The sequence spans 215 residues: Pyrrolidone-carboxylate peptidase (215 aa).

Residues Glu-80, Cys-143, and His-167 contribute to the active site.

Belongs to the peptidase C15 family. As to quaternary structure, homotetramer.

Its subcellular location is the cytoplasm. It carries out the reaction Release of an N-terminal pyroglutamyl group from a polypeptide, the second amino acid generally not being Pro.. Removes 5-oxoproline from various penultimate amino acid residues except L-proline. The chain is Pyrrolidone-carboxylate peptidase from Pectobacterium carotovorum subsp. carotovorum (strain PC1).